Consider the following 1020-residue polypeptide: Calcium-transporting ATPase sarcoplasmic/endoplasmic reticulum type (1020 aa).

The Cytoplasmic segment spans residues 1–48 (MEDGHSKTVEQSLNFFGTDPERGLTLDQIKANQKKYGPNELPTEEGKS). Residues 49-69 (IWQLVLEQFDDLLVKILLLAA) form a helical membrane-spanning segment. Over 70–89 (IISFVLALFEEHEETFTAFV) the chain is Lumenal. The chain crosses the membrane as a helical span at residues 90-110 (EPLVILLILIANAVVGVWQER). Topologically, residues 111-253 (NAESAIEALK…EIKTPLQQKL (143 aa)) are cytoplasmic. The residue at position 240 (S240) is a Phosphoserine. The helical transmembrane segment at 254 to 273 (DEFGEQLSKVISVICVAVWA) threads the bilayer. Topologically, residues 274–295 (INIGHFNDPAHGGSWIKGAIYY) are lumenal. A helical membrane pass occupies residues 296–313 (FKIAVALAVAAIPEGLPA). Residues V304, A305, I307, and E309 each coordinate Ca(2+). Residues 314 to 757 (VITTCLALGT…EEGRAIYNNM (444 aa)) are Cytoplasmic-facing. Catalysis depends on D351, which acts as the 4-aspartylphosphate intermediate. Mg(2+) contacts are provided by D703 and D707. The chain crosses the membrane as a helical span at residues 758–777 (KQFIRYLISSNIGEVVSIFL). Ca(2+) is bound by residues N768 and E771. At 778-787 (TAALGLPEAL) the chain is on the lumenal side. Residues 788–808 (IPVQLLWVNLVTDGLPATALG) form a helical membrane-spanning segment. 3 residues coordinate Ca(2+): N796, T799, and D800. Residues 809 to 828 (FNPPDLDIMEKPPRKADEGL) are Cytoplasmic-facing. Residues 829–851 (ISGWLFFRYMAIGFYVGAATVGA) form a helical membrane-spanning segment. The Lumenal portion of the chain corresponds to 852-897 (AAWWFVFSDEGPKLSYWQLTHHLSCLGGGDEFKGVDCKIFSDPHAM). The chain crosses the membrane as a helical span at residues 898–917 (TMALSVLVTIEMLNAMNSLS). Position 908 (E908) interacts with Ca(2+). The Cytoplasmic portion of the chain corresponds to 918 to 930 (ENQSLITMPPWCN). A helical membrane pass occupies residues 931-949 (LWLIGSMALSFTLHFVILY). Residues 950-964 (VDVLSTVFQVTPLSA) are Lumenal-facing. A helical membrane pass occupies residues 965–985 (EEWITVMKFSIPVVLLDETLK). Residues 986 to 1020 (FVARKIADGESPIYKMHGIVLMWAVFFGLLYAMML) are Cytoplasmic-facing.

It belongs to the cation transport ATPase (P-type) (TC 3.A.3) family. Interacts with SclA and SclB.

It is found in the endoplasmic reticulum membrane. The protein localises to the sarcoplasmic reticulum membrane. The catalysed reaction is Ca(2+)(in) + ATP + H2O = Ca(2+)(out) + ADP + phosphate + H(+). Its function is as follows. This magnesium-dependent enzyme catalyzes the hydrolysis of ATP coupled with the transport of calcium. This chain is Calcium-transporting ATPase sarcoplasmic/endoplasmic reticulum type, found in Drosophila melanogaster (Fruit fly).